The chain runs to 146 residues: Large ribosomal subunit protein uL23m (146 aa).

Residues 108–146 (PDLFPEKEPTSPDPLEEELPQQRQSSDPRCPGIPSWFGL) form a disordered region.

The protein belongs to the universal ribosomal protein uL23 family. Component of the mitochondrial ribosome large subunit (39S) which comprises a 16S rRNA and about 50 distinct proteins.

Its subcellular location is the mitochondrion. The sequence is that of Large ribosomal subunit protein uL23m (Mrpl23) from Rattus norvegicus (Rat).